The chain runs to 862 residues: Ubiquitin carboxyl-terminal hydrolase 13 (862 aa).

The segment at 182 to 290 adopts a UBP-type; degenerate zinc-finger fold; sequence QASKHAKSLV…KHLAHFGIDM (109 aa). Residues cysteine 206, cysteine 209, cysteine 226, and histidine 239 each contribute to the Zn(2+) site. The region spanning 331–860 is the USP domain; that stretch reads TGMKNLGNSC…LGYIYFYHRI (530 aa). The active-site Nucleophile is the cysteine 340. 2 UBA domains span residues 647 to 688 and 722 to 762; these read DIDE…IIAH and QPPE…IFSH. Histidine 822 (proton acceptor) is an active-site residue.

The protein belongs to the peptidase C19 family.

It carries out the reaction Thiol-dependent hydrolysis of ester, thioester, amide, peptide and isopeptide bonds formed by the C-terminal Gly of ubiquitin (a 76-residue protein attached to proteins as an intracellular targeting signal).. Its activity is regulated as follows. Specifically inhibited by spautin-1 (specific and potent autophagy inhibitor-1), a derivative of MBCQ that binds to USP13 and inhibits deubiquitinase activity. Functionally, deubiquitinase that mediates deubiquitination of target proteins and is involved in various processes such as autophagy and endoplasmic reticulum-associated degradation (ERAD). This is Ubiquitin carboxyl-terminal hydrolase 13 (USP13) from Gallus gallus (Chicken).